The primary structure comprises 484 residues: Chromosomal replication initiator protein DnaA (484 aa).

A domain I, interacts with DnaA modulators region spans residues 1–83 (MQPPSQDWAS…LAWRTVWPGI (83 aa)). Residues 83-146 (IAEVKVSVRN…EKKAEGEDQN (64 aa)) form a domain II region. The tract at residues 110-146 (GDQPRPLPKKPAKKKQSVPATPKSTSPEKKAEGEDQN) is disordered. Positions 116–125 (LPKKPAKKKQ) are enriched in basic residues. Residues 135-146 (SPEKKAEGEDQN) show a composition bias toward basic and acidic residues. The interval 147-364 (QFEERYNFDN…GALNRVVAYA (218 aa)) is domain III, AAA+ region. Positions 191, 193, 194, and 195 each coordinate ATP. The tract at residues 365-484 (TLSNRPINMD…VRLLMRQFEG (120 aa)) is domain IV, binds dsDNA.

It belongs to the DnaA family. As to quaternary structure, oligomerizes as a right-handed, spiral filament on DNA at oriC.

Its subcellular location is the cytoplasm. Its function is as follows. Plays an essential role in the initiation and regulation of chromosomal replication. ATP-DnaA binds to the origin of replication (oriC) to initiate formation of the DNA replication initiation complex once per cell cycle. Binds the DnaA box (a 9 base pair repeat at the origin) and separates the double-stranded (ds)DNA. Forms a right-handed helical filament on oriC DNA; dsDNA binds to the exterior of the filament while single-stranded (ss)DNA is stabiized in the filament's interior. The ATP-DnaA-oriC complex binds and stabilizes one strand of the AT-rich DNA unwinding element (DUE), permitting loading of DNA polymerase. After initiation quickly degrades to an ADP-DnaA complex that is not apt for DNA replication. Binds acidic phospholipids. This is Chromosomal replication initiator protein DnaA from Zymomonas mobilis subsp. mobilis (strain ATCC 31821 / ZM4 / CP4).